Reading from the N-terminus, the 1032-residue chain is Serine/threonine-protein kinase ppk31 (1032 aa).

The PAS domain occupies 3-72 (NPEQLKRILS…KATDNLFRKS (70 aa)). In terms of domain architecture, Protein kinase spans 528–877 (FILLKEINRG…YQEIKKHPFF (350 aa)). ATP-binding positions include 534–542 (INRGAYGRV) and K557. D652 functions as the Proton acceptor in the catalytic mechanism. The disordered stretch occupies residues 938-963 (PKATPADSGTETSNSAAFSASEEETT). The span at 947 to 957 (TETSNSAAFSA) shows a compositional bias: low complexity.

The protein belongs to the protein kinase superfamily. Ser/Thr protein kinase family.

The protein resides in the cytoplasm. The enzyme catalyses L-seryl-[protein] + ATP = O-phospho-L-seryl-[protein] + ADP + H(+). It carries out the reaction L-threonyl-[protein] + ATP = O-phospho-L-threonyl-[protein] + ADP + H(+). Functionally, has a role in meiosis. The chain is Serine/threonine-protein kinase ppk31 (ppk31) from Schizosaccharomyces pombe (strain 972 / ATCC 24843) (Fission yeast).